Reading from the N-terminus, the 1038-residue chain is MTSSLHRPFRVPWLLWAVLLVSTTAASQNQERLCAFKDPYQQDLGIGESRISHENGTILCSKGSTCYGLWEKSKGDINLVKQGCWSHIGDPQECHYEECVVTTTPPSIQNGTYRFCCCSTDLCNVNFTENFPPPDTTPLSPPHSFNRDETIIIALASVSVLAVLIVALCFGYRMLTGDRKQGLHSMNMMEAAAAEPSLDLDNLKLLELIGRGRYGAVYKGSLDERPVAVKVFSFANRQNFINEKNIYRVPLMEHDNIARFIVGDERLTADGRMEYLLVMEYYPNGSLCKYLSLHTSDWVSSCRLAHSVTRGLAYLHTELPRGDHYKPAISHRDLNSRNVLVKNDGACVISDFGLSMRLTGNRLVRPGEEDNAAISEVGTIRYMAPEVLEGAVNLRDCESALKQVDMYALGLIYWEVFMRCTDLFPGESVPDYQMAFQTEVGNHPTFEDMQVLVSREKQRPKFPEAWKENSLAVRSLKETIEDCWDQDAEARLTAQCAEERMAELMMIWERNKSVSPTVNPMSTAMQNERNLSHNRRVPKIGPYPDYSSSSYIEDSIHHTDSIVKNISSEHSMSSTPLTIGEKNRNSINYERQQAQARIPSPETSVTSLSTNTTTTNTTGLTPSTGMTTISEMPYPDETHLHATNVAQSIGPTPVCLQLTEEDLETNKLDPKEVDKNLKESSDENLMEHSLKQFSGPDPLSSTSSSLLYPLIKLAVEVTGQQDFTQAANGQACLIPDVPPAQIYPLPKQQNLPKRPTSLPLNTKNSTKEPRLKFGNKHKSNLKQVETGVAKMNTINAAEPHVVTVTMNGVAGRSHNVNSHAATTQYANGAVPAGQAANIVAHRSQEMLQNQFIGEDTRLNINSSPDEHEPLLRREQQAGHDEGVLDRLVDRRERPLEGGRTNSNNNNSNPCSEQDILTQGVTSTAADPGPSKPRRAQRPNSLDLSATNILDGSSIQIGESTQDGKSGSGEKIKRRVKTPYSLKRWRPSTWVISTEPLDCEVNNNGSDRAVHSKSSTAVYLAEGGTATTTVSKDIGMNCL.

The N-terminal stretch at methionine 1 to alanine 26 is a signal peptide. Residues serine 27–threonine 150 lie on the Extracellular side of the membrane. 5 disulfides stabilise this stretch: cysteine 34/cysteine 66, cysteine 60/cysteine 84, cysteine 94/cysteine 117, cysteine 99/cysteine 116, and cysteine 118/cysteine 123. A glycan (N-linked (GlcNAc...) asparagine) is linked at asparagine 55. Residue asparagine 110 is glycosylated (N-linked (GlcNAc...) asparagine). N-linked (GlcNAc...) asparagine glycosylation is present at asparagine 126. The chain crosses the membrane as a helical span at residues isoleucine 151 to glycine 171. Residues tyrosine 172–leucine 1038 lie on the Cytoplasmic side of the membrane. The region spanning leucine 203–leucine 504 is the Protein kinase domain. ATP contacts are provided by residues isoleucine 209–valine 217, lysine 230, and glutamate 280–tyrosine 282. Catalysis depends on aspartate 333, which acts as the Proton acceptor. Residues arginine 337–asparagine 338 and aspartate 351 contribute to the ATP site. A Phosphothreonine modification is found at threonine 379. Phosphoserine is present on serine 586. The disordered stretch occupies residues glutamine 593–methionine 626. Low complexity predominate over residues threonine 603–methionine 626. Residues serine 680 and serine 681 each carry the phosphoserine modification. The segment at proline 746–proline 769 is disordered. Serine 843 bears the Phosphoserine mark. Residues arginine 872–glutamate 896 are compositionally biased toward basic and acidic residues. A disordered region spans residues arginine 872–arginine 974. Polar residues-rich tracts occupy residues proline 909–alanine 924 and arginine 937–lysine 964.

The protein belongs to the protein kinase superfamily. TKL Ser/Thr protein kinase family. TGFB receptor subfamily. As to quaternary structure, interacts with GDF5. Interacts with BMP4. Interacts with SCUBE3. Interacts with TSC22D1/TSC-22. Interacts with activin A/INHBA. The cofactor is Mg(2+). Mn(2+) is required as a cofactor.

The protein resides in the cell membrane. It catalyses the reaction L-threonyl-[receptor-protein] + ATP = O-phospho-L-threonyl-[receptor-protein] + ADP + H(+). The catalysed reaction is L-seryl-[receptor-protein] + ATP = O-phospho-L-seryl-[receptor-protein] + ADP + H(+). On ligand binding, forms a receptor complex consisting of two type II and two type I transmembrane serine/threonine kinases. Type II receptors phosphorylate and activate type I receptors which autophosphorylate, then bind and activate SMAD transcriptional regulators. Can also mediate signaling through the activation of the p38MAPK cascade. Binds to BMP7, BMP2 and, less efficiently, BMP4. Binding is weak but enhanced by the presence of type I receptors for BMPs. Mediates induction of adipogenesis by GDF6. Promotes signaling also by binding to activin A/INHBA. In Mus musculus (Mouse), this protein is Bone morphogenetic protein receptor type-2 (Bmpr2).